The sequence spans 498 residues: Acetyl-coenzyme A carboxylase carboxyl transferase subunit beta, chloroplastic (498 aa).

Residues 36-59 (SVNEDPIINDMDKDIPSGSDSDNS) are disordered. The CoA carboxyltransferase N-terminal domain occupies 231–498 (LWVQCENCYG…FFPLNQNSIK (268 aa)). The Zn(2+) site is built by C235, C238, C254, and C257. The C4-type zinc finger occupies 235–257 (CENCYGLNYKRFLKSKMNICEHC).

This sequence belongs to the AccD/PCCB family. As to quaternary structure, acetyl-CoA carboxylase is a heterohexamer composed of biotin carboxyl carrier protein, biotin carboxylase and 2 subunits each of ACCase subunit alpha and ACCase plastid-coded subunit beta (accD). Zn(2+) is required as a cofactor.

The protein localises to the plastid. It localises to the chloroplast stroma. It carries out the reaction N(6)-carboxybiotinyl-L-lysyl-[protein] + acetyl-CoA = N(6)-biotinyl-L-lysyl-[protein] + malonyl-CoA. Its pathway is lipid metabolism; malonyl-CoA biosynthesis; malonyl-CoA from acetyl-CoA: step 1/1. In terms of biological role, component of the acetyl coenzyme A carboxylase (ACC) complex. Biotin carboxylase (BC) catalyzes the carboxylation of biotin on its carrier protein (BCCP) and then the CO(2) group is transferred by the transcarboxylase to acetyl-CoA to form malonyl-CoA. The protein is Acetyl-coenzyme A carboxylase carboxyl transferase subunit beta, chloroplastic of Morus indica (Mulberry).